Consider the following 213-residue polypeptide: tRNA (guanine-N(7)-)-methyltransferase (213 aa).

4 residues coordinate S-adenosyl-L-methionine: glutamate 44, glutamate 69, asparagine 96, and aspartate 118. Aspartate 118 is a catalytic residue. Residue lysine 122 participates in substrate binding. Residues 124-129 (RHEKRR) form an interaction with RNA region. Substrate is bound by residues aspartate 154 and 192-195 (TEYE).

It belongs to the class I-like SAM-binding methyltransferase superfamily. TrmB family.

The catalysed reaction is guanosine(46) in tRNA + S-adenosyl-L-methionine = N(7)-methylguanosine(46) in tRNA + S-adenosyl-L-homocysteine. It functions in the pathway tRNA modification; N(7)-methylguanine-tRNA biosynthesis. Its function is as follows. Catalyzes the formation of N(7)-methylguanine at position 46 (m7G46) in tRNA. The polypeptide is tRNA (guanine-N(7)-)-methyltransferase (Latilactobacillus sakei subsp. sakei (strain 23K) (Lactobacillus sakei subsp. sakei)).